A 477-amino-acid polypeptide reads, in one-letter code: Bifunctional protein HldE (477 aa).

A ribokinase region spans residues 1 to 318; it reads MKVTLPEFER…ENAVRGRADT (318 aa). Lys-179 carries the post-translational modification N6-acetyllysine. Residue 195 to 198 participates in ATP binding; it reads NLSE. Asp-264 is an active-site residue. The segment at 344-477 is cytidylyltransferase; it reads MTNGVFDILH…IKKIQQDKKG (134 aa).

In the N-terminal section; belongs to the carbohydrate kinase PfkB family. The protein in the C-terminal section; belongs to the cytidylyltransferase family. In terms of assembly, homodimer.

The enzyme catalyses D-glycero-beta-D-manno-heptose 7-phosphate + ATP = D-glycero-beta-D-manno-heptose 1,7-bisphosphate + ADP + H(+). It carries out the reaction D-glycero-beta-D-manno-heptose 1-phosphate + ATP + H(+) = ADP-D-glycero-beta-D-manno-heptose + diphosphate. Its pathway is nucleotide-sugar biosynthesis; ADP-L-glycero-beta-D-manno-heptose biosynthesis; ADP-L-glycero-beta-D-manno-heptose from D-glycero-beta-D-manno-heptose 7-phosphate: step 1/4. The protein operates within nucleotide-sugar biosynthesis; ADP-L-glycero-beta-D-manno-heptose biosynthesis; ADP-L-glycero-beta-D-manno-heptose from D-glycero-beta-D-manno-heptose 7-phosphate: step 3/4. It participates in bacterial outer membrane biogenesis; LPS core biosynthesis. Functionally, catalyzes the phosphorylation of D-glycero-D-manno-heptose 7-phosphate at the C-1 position to selectively form D-glycero-beta-D-manno-heptose-1,7-bisphosphate. Its function is as follows. Catalyzes the ADP transfer from ATP to D-glycero-beta-D-manno-heptose 1-phosphate, yielding ADP-D-glycero-beta-D-manno-heptose. This is Bifunctional protein HldE from Shigella flexneri.